A 431-amino-acid polypeptide reads, in one-letter code: Protein CLT2, chloroplastic (431 aa).

The transit peptide at 1 to 79 (MDTVLMATTP…PMRRPRFSVG (79 aa)) directs the protein to the chloroplast. Helical transmembrane passes span 99 to 119 (VVIV…LVPM), 122 to 142 (YPFF…FTIL), 163 to 183 (FAII…AAAM), 188 to 208 (VIPI…LLIL), 212 to 232 (FLLN…VAVS), 244 to 264 (IGFL…GASI), 284 to 304 (IFVV…LLLP), 343 to 363 (ILPL…LHLV), 365 to 385 (ISSA…AVYI), and 403 to 423 (FTMG…PTTP).

The protein belongs to the CRT-like transporter family.

The protein resides in the plastid. It localises to the chloroplast membrane. Functionally, involved in thiol transport from the plastid to the cytosol. Transports probably both glutathione (GSH) and its precursor, gamma-glutamylcysteine (gamma-EC). This is Protein CLT2, chloroplastic from Arabidopsis thaliana (Mouse-ear cress).